Reading from the N-terminus, the 296-residue chain is Giardin subunit alpha-2 (296 aa).

Annexin repeat units lie at residues 2 to 71 (PKLS…MDLF), 73 to 143 (DRHE…MEKW), 153 to 223 (GSPD…AHFA), and 226 to 293 (GMHK…TLWR).

The protein belongs to the annexin family. Giardin subunit alpha subfamily.

It localises to the cytoplasm. It is found in the cytoskeleton. Functionally, giardins are involved in parasite attachment to the intestinal mucosa and in the cytoskeletal disassembly and reassembly that marks the transition from infectious trophozoite to transmissible cyst. They may interact with other cytoskeletal proteins such as microtubules in the microribbons or crossbridges, to maintain the integrity of the ventral disk. The protein is Giardin subunit alpha-2 of Giardia intestinalis (Giardia lamblia).